The following is a 457-amino-acid chain: Multidrug resistance protein MdtK (457 aa).

12 consecutive transmembrane segments (helical) span residues 11 to 31 (LLAL…MGFV), 53 to 73 (IWLP…PVIA), 93 to 113 (WLAG…GYII), 127 to 147 (AVGY…FQVA), 160 to 180 (GMVM…IFIY), 189 to 209 (GGVG…LAMV), 243 to 263 (LPIA…ALLV), 276 to 296 (IALN…AAVT), 314 to 334 (AART…IFTV), 350 to 370 (VVTL…SDSI), 387 to 407 (IFYI…YILA), and 418 to 438 (PAGF…MMML).

It belongs to the multi antimicrobial extrusion (MATE) (TC 2.A.66.1) family. MdtK subfamily.

It is found in the cell inner membrane. Multidrug efflux pump that functions probably as a Na(+)/drug antiporter. This is Multidrug resistance protein MdtK from Escherichia coli O139:H28 (strain E24377A / ETEC).